A 65-amino-acid chain; its full sequence is Large ribosomal subunit protein bL35 (65 aa).

The tract at residues 1–26 (MPKMKTNRASAKRFKKTASGGFKAGQ) is disordered.

Belongs to the bacterial ribosomal protein bL35 family.

The sequence is that of Large ribosomal subunit protein bL35 from Oenococcus oeni (strain ATCC BAA-331 / PSU-1).